The primary structure comprises 511 residues: Colicin-B (511 aa).

The TonB box motif lies at 17–24 (DTMVVWPS). The next 2 membrane-spanning stretches (helical) occupy residues 455–475 (MASAVALSLFSLTLGSALIAF) and 477–497 (LSATVVGFVGVVIAGAIGAFI).

It belongs to the channel forming colicin family.

The protein localises to the cell membrane. Functionally, this colicin is a channel-forming colicin. This class of transmembrane toxins depolarize the cytoplasmic membrane, leading to dissipation of cellular energy. Colicins are polypeptide toxins produced by and active against E.coli and closely related bacteria. In Escherichia coli, this protein is Colicin-B (cba).